Reading from the N-terminus, the 344-residue chain is N-acetyl-gamma-glutamyl-phosphate reductase (344 aa).

C150 is a catalytic residue.

Belongs to the NAGSA dehydrogenase family. Type 1 subfamily.

Its subcellular location is the cytoplasm. It carries out the reaction N-acetyl-L-glutamate 5-semialdehyde + phosphate + NADP(+) = N-acetyl-L-glutamyl 5-phosphate + NADPH + H(+). The protein operates within amino-acid biosynthesis; L-arginine biosynthesis; N(2)-acetyl-L-ornithine from L-glutamate: step 3/4. In terms of biological role, catalyzes the NADPH-dependent reduction of N-acetyl-5-glutamyl phosphate to yield N-acetyl-L-glutamate 5-semialdehyde. In Pseudomonas entomophila (strain L48), this protein is N-acetyl-gamma-glutamyl-phosphate reductase.